Consider the following 147-residue polypeptide: Large ribosomal subunit protein uL15 (147 aa).

Over residues 1-10 (MYLNTLSPNS) the composition is skewed to polar residues. A disordered region spans residues 1–48 (MYLNTLSPNSKSHKKSKRVGRGIGSGFGKTSGRGHKGQKSRSGCKIRR). A compositionally biased stretch (basic residues) spans 11-20 (KSHKKSKRVG). The span at 21-31 (RGIGSGFGKTS) shows a compositional bias: gly residues. The span at 32 to 47 (GRGHKGQKSRSGCKIR) shows a compositional bias: basic residues.

Belongs to the universal ribosomal protein uL15 family. As to quaternary structure, part of the 50S ribosomal subunit.

In terms of biological role, binds to the 23S rRNA. In Buchnera aphidicola subsp. Baizongia pistaciae (strain Bp), this protein is Large ribosomal subunit protein uL15.